The sequence spans 375 residues: MAKRDYYEVLGVERGASEAELKKAYRRLAMKYHPDRNPDDKGAEEKFKEANEAYEVLSDAGKRSAYDQYGHAGVDPQMGGGGGAGFGGANFSDIFGDVFSDFFGGGRGGSRGGAQRGSDLRYTLELDLEEAVRGTTVTIRVPTLVGCKTCDGTGAKKGTSPVTCTTCGGIGQVRMQQGFFSVQQTCPRCHGSGKMITDPCGSCHGQGRVEESKTLSVKVPPGVDTGDRIRLSGEGEAGTHGGPAGDLYVVVNVREHAIFQRDGKHLYCEVPISFADAALGGELEVPTLDGRVKLKIPEGTQTGKLFRLRGKGVAPVRGGAAGDLMCRVAVETPVNLNKRQRELLDEFRKSLQGDDSHSPKASGWFEGVKRFFGDV.

The J domain occupies 5-70 (DYYEVLGVER…GKRSAYDQYG (66 aa)). A CR-type zinc finger spans residues 134 to 212 (GTTVTIRVPT…CHGQGRVEES (79 aa)). Residues Cys147, Cys150, Cys164, Cys167, Cys186, Cys189, Cys200, and Cys203 each contribute to the Zn(2+) site. 4 CXXCXGXG motif repeats span residues 147–154 (CKTCDGTG), 164–171 (CTTCGGIG), 186–193 (CPRCHGSG), and 200–207 (CGSCHGQG).

The protein belongs to the DnaJ family. As to quaternary structure, homodimer. Zn(2+) serves as cofactor.

It is found in the cytoplasm. Participates actively in the response to hyperosmotic and heat shock by preventing the aggregation of stress-denatured proteins and by disaggregating proteins, also in an autonomous, DnaK-independent fashion. Unfolded proteins bind initially to DnaJ; upon interaction with the DnaJ-bound protein, DnaK hydrolyzes its bound ATP, resulting in the formation of a stable complex. GrpE releases ADP from DnaK; ATP binding to DnaK triggers the release of the substrate protein, thus completing the reaction cycle. Several rounds of ATP-dependent interactions between DnaJ, DnaK and GrpE are required for fully efficient folding. Also involved, together with DnaK and GrpE, in the DNA replication of plasmids through activation of initiation proteins. This is Chaperone protein DnaJ from Ectopseudomonas mendocina (strain ymp) (Pseudomonas mendocina).